The following is a 295-amino-acid chain: Alpha-soluble NSF attachment protein (295 aa).

M1 bears the N-acetylmethionine mark. Residues S26, S29, and S195 each carry the phosphoserine modification.

This sequence belongs to the SNAP family. As to quaternary structure, interacts with PRKCABP, and disrupts the interaction between GRIA2 and PRKCABP, leading to the internalization of GRIA2. Found in a complex with VAMP8. Component of a SNARE-like complex that contains at least ZW10, USE1L, RINT1, STX18 and NAPA/SNAP-alpha. Interacts with VTI1A. Interacts with STX12. Interacts with GNA12 (via N-terminus); the interaction promotes CDH5 localization to plasma membrane.

It localises to the cell membrane. Functionally, required for vesicular transport between the endoplasmic reticulum and the Golgi apparatus. Together with GNA12 promotes CDH5 localization to plasma membrane. The chain is Alpha-soluble NSF attachment protein (Napa) from Mus musculus (Mouse).